The primary structure comprises 186 residues: Ribosome-recycling factor (186 aa).

It belongs to the RRF family.

The protein localises to the cytoplasm. In terms of biological role, responsible for the release of ribosomes from messenger RNA at the termination of protein biosynthesis. May increase the efficiency of translation by recycling ribosomes from one round of translation to another. This is Ribosome-recycling factor from Wolinella succinogenes (strain ATCC 29543 / DSM 1740 / CCUG 13145 / JCM 31913 / LMG 7466 / NCTC 11488 / FDC 602W) (Vibrio succinogenes).